Reading from the N-terminus, the 191-residue chain is Orotate phosphoribosyltransferase (191 aa).

114-122 (EDVVTTGKS) contributes to the 5-phospho-alpha-D-ribose 1-diphosphate binding site. 2 residues coordinate orotate: T118 and R146.

The protein belongs to the purine/pyrimidine phosphoribosyltransferase family. PyrE subfamily. Homodimer. Mg(2+) is required as a cofactor.

The catalysed reaction is orotidine 5'-phosphate + diphosphate = orotate + 5-phospho-alpha-D-ribose 1-diphosphate. It participates in pyrimidine metabolism; UMP biosynthesis via de novo pathway; UMP from orotate: step 1/2. Its function is as follows. Catalyzes the transfer of a ribosyl phosphate group from 5-phosphoribose 1-diphosphate to orotate, leading to the formation of orotidine monophosphate (OMP). The protein is Orotate phosphoribosyltransferase of Clostridium botulinum (strain Kyoto / Type A2).